Here is a 1175-residue protein sequence, read N- to C-terminus: Double-stranded RNA-specific adenosine deaminase (1175 aa).

Asymmetric dimethylarginine is present on residues Arg30 and Arg42. A Z-binding 1 domain is found at 135–201 (LSISQNPEQK…GKPPLWSLVP (67 aa)). Positions 135–204 (LSISQNPEQK…PLWSLVPLSQ (70 aa)) are interaction with Z-DNA. The segment at 207–239 (TQPPRAVNSDKEVPRGEPDLDSEDGDPASDLEG) is disordered. Residues 214-224 (NSDKEVPRGEP) are compositionally biased toward basic and acidic residues. Acidic residues predominate over residues 225 to 235 (DLDSEDGDPAS). Residues Ser228 and Ser235 each carry the phosphoserine modification. The region spanning 243 to 307 (LLDMAEIKEK…ATPPIWYLTD (65 aa)) is the Z-binding 2 domain. Residues 315-384 (MKRSTHSGPA…ARPGPVRLRP (70 aa)) are disordered. Residues 357-376 (KRVENGQEPVTKYESRHEAR) show a composition bias toward basic and acidic residues. A Glycyl lysine isopeptide (Lys-Gly) (interchain with G-Cter in SUMO); alternate cross-link involves residue Lys368. A Glycyl lysine isopeptide (Lys-Gly) (interchain with G-Cter in SUMO1); alternate cross-link involves residue Lys368. Lys368 is covalently cross-linked (Glycyl lysine isopeptide (Lys-Gly) (interchain with G-Cter in SUMO2); alternate). At Ser431 the chain carries Phosphoserine. In terms of domain architecture, DRBM 1 spans 453-521 (NPVSGLLEYA…AVKAMAILLR (69 aa)). Positions 524-561 (KAKDSGQPEELSNCPMEEDPEKPAESQPPSSSATSLFS) are disordered. The segment covering 550-561 (QPPSSSATSLFS) has biased composition (polar residues). Phosphoserine occurs at positions 564, 579, and 586. The DRBM 2 domain maps to 564–632 (SPVTTLLECM…AEEAMKALQE (69 aa)). The segment at 632 to 652 (EEAANSADDQSGGANTDSLDE) is disordered. Residues 638–648 (ADDQSGGANTD) show a composition bias toward polar residues. The interval 662 to 671 (IGELVRYLNT) is N-terminal extension of DRBM 3 and constituent of a bi-partite nuclear localization signal. The DRBM 3 domain maps to 672 to 740 (NPVGGLLEYA…ADAALRVLIG (69 aa)). Positions 741 to 747 (ESEKAEQ) are C-terminal extension of DRBM 3 and constituent of a bi-partite nuclear localization signal. A Phosphothreonine modification is found at Thr754. Ser760, Ser769, and Ser771 each carry phosphoserine. Residue Lys821 forms a Glycyl lysine isopeptide (Lys-Gly) (interchain with G-Cter in SUMO2) linkage. One can recognise an A to I editase domain in the interval 832–1167 (SLGTGNRCVK…ISKPQEEKNF (336 aa)). His856 is a binding site for Zn(2+). Glu858 serves as the catalytic Proton donor. 2 residues coordinate Zn(2+): Cys912 and Cys982.

Homodimer. Homodimerization is essential for its catalytic activity. Isoform 5 can form heterodimers with ADARB1/ADAR2. Isoform 1 interacts with ILF2/NF45 and ILF3/NF90. Binding to ILF3/NF90 up-regulates ILF3-mediated gene expression. Isoform 1 and isoform 5 (via DRBM 3 domain) interact with TNPO1. Isoform 5 (via DRBM domains) interacts with XPO5. Isoform 1 and isoform 5 can interact with EIF2AK2/PKR and UPF1. In terms of processing, sumoylation reduces RNA-editing activity. In terms of tissue distribution, detected in brain.

Its subcellular location is the cytoplasm. It localises to the nucleus. The enzyme catalyses adenosine in double-stranded RNA + H2O + H(+) = inosine in double-stranded RNA + NH4(+). In terms of biological role, catalyzes the hydrolytic deamination of adenosine to inosine in double-stranded RNA (dsRNA) referred to as A-to-I RNA editing. This may affect gene expression and function in a number of ways that include mRNA translation by changing codons and hence the amino acid sequence of proteins; pre-mRNA splicing by altering splice site recognition sequences; RNA stability by changing sequences involved in nuclease recognition; genetic stability in the case of RNA virus genomes by changing sequences during viral RNA replication; and RNA structure-dependent activities such as microRNA production or targeting or protein-RNA interactions. Can edit both viral and cellular RNAs and can edit RNAs at multiple sites (hyper-editing) or at specific sites (site-specific editing). Its cellular RNA substrates include: bladder cancer-associated protein (BLCAP), neurotransmitter receptors for glutamate (GRIA2) and serotonin (HTR2C) and GABA receptor (GABRA3). Site-specific RNA editing of transcripts encoding these proteins results in amino acid substitutions which consequently alters their functional activities. Exhibits low-level editing at the GRIA2 Q/R site, but edits efficiently at the R/G site and HOTSPOT1. Does not affect polyomavirus replication but provides protection against virus-induced cytopathic effects. Essential for embryonic development and cell survival and plays a critical role in the maintenance of hematopoietic stem cells. This is Double-stranded RNA-specific adenosine deaminase (Adar) from Rattus norvegicus (Rat).